The following is a 392-amino-acid chain: Chorismate synthase (392 aa).

Positions 40 and 46 each coordinate NADP(+). FMN-binding positions include 135–137 (RAS), 256–257 (QA), Gly300, 315–319 (KPISS), and Arg341.

This sequence belongs to the chorismate synthase family. Homotetramer. It depends on FMNH2 as a cofactor.

The catalysed reaction is 5-O-(1-carboxyvinyl)-3-phosphoshikimate = chorismate + phosphate. Its pathway is metabolic intermediate biosynthesis; chorismate biosynthesis; chorismate from D-erythrose 4-phosphate and phosphoenolpyruvate: step 7/7. Catalyzes the anti-1,4-elimination of the C-3 phosphate and the C-6 proR hydrogen from 5-enolpyruvylshikimate-3-phosphate (EPSP) to yield chorismate, which is the branch point compound that serves as the starting substrate for the three terminal pathways of aromatic amino acid biosynthesis. This reaction introduces a second double bond into the aromatic ring system. This chain is Chorismate synthase, found in Salinispora tropica (strain ATCC BAA-916 / DSM 44818 / JCM 13857 / NBRC 105044 / CNB-440).